The chain runs to 227 residues: Ribosomal RNA small subunit methyltransferase G (227 aa).

S-adenosyl-L-methionine is bound by residues Gly-81, Leu-86, 131-132 (AE), and Arg-149.

The protein belongs to the methyltransferase superfamily. RNA methyltransferase RsmG family.

It localises to the cytoplasm. Its function is as follows. Specifically methylates the N7 position of guanine in position 518 of 16S rRNA. The sequence is that of Ribosomal RNA small subunit methyltransferase G from Rhodococcus jostii (strain RHA1).